Consider the following 474-residue polypeptide: GTPase Der (474 aa).

2 EngA-type G domains span residues 2-166 and 212-385; these read LRIA…NVPE and LKIA…ETVS. GTP-binding positions include 8-15, 55-59, 118-121, 218-225, 265-269, and 330-333; these read GRPNVGKS, DTGGV, NKAD, DTAGL, and NKWD. In terms of domain architecture, KH-like spans 386–470; the sequence is SKVPTPVVNK…PFDLEFKEKT (85 aa).

This sequence belongs to the TRAFAC class TrmE-Era-EngA-EngB-Septin-like GTPase superfamily. EngA (Der) GTPase family. Associates with the 50S ribosomal subunit.

GTPase that plays an essential role in the late steps of ribosome biogenesis. In Chlamydia caviae (strain ATCC VR-813 / DSM 19441 / 03DC25 / GPIC) (Chlamydophila caviae), this protein is GTPase Der.